The chain runs to 119 residues: Holo-[acyl-carrier-protein] synthase (119 aa).

Residues aspartate 8 and glutamate 58 each contribute to the Mg(2+) site.

It belongs to the P-Pant transferase superfamily. AcpS family. Requires Mg(2+) as cofactor.

The protein localises to the cytoplasm. It carries out the reaction apo-[ACP] + CoA = holo-[ACP] + adenosine 3',5'-bisphosphate + H(+). Its function is as follows. Transfers the 4'-phosphopantetheine moiety from coenzyme A to a Ser of acyl-carrier-protein. The sequence is that of Holo-[acyl-carrier-protein] synthase from Lactobacillus johnsonii (strain CNCM I-12250 / La1 / NCC 533).